The primary structure comprises 291 residues: MAGMKEIRGKIKSVQNTRKITKAMEMVAASKMRRAQERMRAARPYADKVRAIAAHMSRANPEYRHPFMVANEGAKTAGIILVTTDKGLCGGLNTNVLRATVQKFKELEEKGQKVEATAIGSKGLGFLNRFGAKVLSQVVHLGDTPHLDKLIGAVKTQLDLYSEGKLSAVYIAYTRFVNTMKQEAVIEQLLPLSSEHFEADDGTPATSWDYIYEPDAQAVVDELLVRYVEALVYQAVAENMASEQSARMVAMKAASDNAKTVISELQLVYNKSRQAAITKELSEIVGGAAAV.

The protein belongs to the ATPase gamma chain family. In terms of assembly, F-type ATPases have 2 components, CF(1) - the catalytic core - and CF(0) - the membrane proton channel. CF(1) has five subunits: alpha(3), beta(3), gamma(1), delta(1), epsilon(1). CF(0) has three main subunits: a, b and c.

Its subcellular location is the cell inner membrane. In terms of biological role, produces ATP from ADP in the presence of a proton gradient across the membrane. The gamma chain is believed to be important in regulating ATPase activity and the flow of protons through the CF(0) complex. The polypeptide is ATP synthase gamma chain (Burkholderia lata (strain ATCC 17760 / DSM 23089 / LMG 22485 / NCIMB 9086 / R18194 / 383)).